The primary structure comprises 101 residues: Large ribosomal subunit protein uL24 (101 aa).

It belongs to the universal ribosomal protein uL24 family. As to quaternary structure, part of the 50S ribosomal subunit.

Its function is as follows. One of two assembly initiator proteins, it binds directly to the 5'-end of the 23S rRNA, where it nucleates assembly of the 50S subunit. In terms of biological role, one of the proteins that surrounds the polypeptide exit tunnel on the outside of the subunit. The sequence is that of Large ribosomal subunit protein uL24 from Borrelia turicatae (strain 91E135).